We begin with the raw amino-acid sequence, 105 residues long: Cysteine-rich venom protein VAR2 (105 aa).

Positions 1-22 (MILLKLYLTLAAILCQSRGTTS) are cleaved as a signal peptide.

It belongs to the CRISP family. Contains 8 disulfide bonds. As to expression, expressed by the venom gland.

The protein localises to the secreted. In terms of biological role, blocks ryanodine receptors, and potassium channels. The chain is Cysteine-rich venom protein VAR2 from Varanus acanthurus (Ridge-tailed monitor).